A 416-amino-acid chain; its full sequence is Transmembrane protease serine 11B-like protein (416 aa).

Topologically, residues 1 to 15 are cytoplasmic; the sequence is MYRPVIASRKSIPPW. The helical; Signal-anchor for type II membrane protein transmembrane segment at 16–36 threads the bilayer; sequence LIILCVLGVLAALGIIIGLLV. At 37-416 the chain is on the extracellular side; that stretch reads HFLAVENKIY…RNWIASKTGI (380 aa). One can recognise an SEA domain in the interval 44 to 161; sequence KIYYYQGGFK…GSLKLTEISK (118 aa). The N-linked (GlcNAc...) asparagine glycan is linked to asparagine 107. The 231-residue stretch at 185–415 folds into the Peptidase S1 domain; it reads ITGGSTAHKG…YRNWIASKTG (231 aa). A disulfide bridge links cysteine 210 with cysteine 226. Histidine 225 (charge relay system) is an active-site residue. N-linked (GlcNAc...) asparagine glycosylation occurs at asparagine 235. The active-site Charge relay system is aspartate 270. 2 disulfides stabilise this stretch: cysteine 335–cysteine 351 and cysteine 362–cysteine 391. The Charge relay system role is filled by serine 366.

The protein belongs to the peptidase S1 family. As to expression, expressed in esophagus, cervix, tongue, and testes.

Its subcellular location is the cell membrane. Its activity is regulated as follows. Inhibited by aprotinin, leupeptin, benzamidine, SERPINA1, SPINT1 and SPINT2. Its function is as follows. Serine protease. This chain is Transmembrane protease serine 11B-like protein (Tmprss11b), found in Mus musculus (Mouse).